The sequence spans 464 residues: Olfactomedin (464 aa).

The N-terminal stretch at 1–16 is a signal peptide; the sequence is MYICLLTLVLIHAAAA. Asn-21, Asn-85, Asn-143, Asn-228, Asn-279, and Asn-383 each carry an N-linked (GlcNAc...) asparagine glycan. The Olfactomedin-like domain occupies 192 to 464; the sequence is SCQHQGLAHI…LLHYDIALKP (273 aa). Cysteines 193 and 394 form a disulfide.

In terms of assembly, oligomer; disulfide-linked. In terms of processing, most, if not all, of the six potential sites for N-glycosylation carry carbohydrate moieties of 8-10 sugar residues. In terms of tissue distribution, expressed exclusively in olfactory neuroepithelium.

The protein resides in the secreted. It localises to the extracellular space. In terms of biological role, may influence the maintenance, growth, or differentiation of chemosensory cilia on the apical dendrites of olfactory neurons. Major component of the extracellular matrix of the olfactory neuroepithelium. This chain is Olfactomedin, found in Aquarana catesbeiana (American bullfrog).